A 377-amino-acid chain; its full sequence is Cobalt-precorrin-5B C(1)-methyltransferase (377 aa).

The tract at residues 1 to 21 is disordered; that stretch reads MNPVRQPYDLAAPAPNGMRRG.

Belongs to the CbiD family.

The enzyme catalyses Co-precorrin-5B + S-adenosyl-L-methionine = Co-precorrin-6A + S-adenosyl-L-homocysteine. Its pathway is cofactor biosynthesis; adenosylcobalamin biosynthesis; cob(II)yrinate a,c-diamide from sirohydrochlorin (anaerobic route): step 6/10. In terms of biological role, catalyzes the methylation of C-1 in cobalt-precorrin-5B to form cobalt-precorrin-6A. This chain is Cobalt-precorrin-5B C(1)-methyltransferase, found in Chromobacterium violaceum (strain ATCC 12472 / DSM 30191 / JCM 1249 / CCUG 213 / NBRC 12614 / NCIMB 9131 / NCTC 9757 / MK).